Consider the following 597-residue polypeptide: MNNIRNFSIIAHIDHGKSTLADRIIQLCGGLSDREMEAQVLDSMDLERERGITIKAQTAALTYKARDGQVYNLNLIDTPGHVDFSYEVSRSLSACEGALLVVDASQGVEAQTVANCYMALDLGVEVVPVLNKIDLPNADPPAAMAEIEDVIGIDATDAVQCSAKTGLGVADVLEALIAKVPPPKGDPDAPLQALIVDSWFDNYVGVVMLVRVVNGTLKPKEKIRLMASGSVNLVESIGIFAPRSVSLPSLSAGQVGFIIAGIKELKAAKVGDTVTLASRPAAEALPGFKEVQPQVFAGLFPVEANQYDALRDSLEKLKLNDAALMYEPEVSQALGFGFRCGFLGLLHMEIVQERLEREFDMDLITTAPTVVYEVIMGDGSLIKVDNPSKMPEPSKIEEIREPIVTVNLYMPQEYVGSVITLCIAKRGIQMDMSYHGRQVKLVYEMPMAEIVLDFFDKLKSTSRGYASMDYEFKEYRASDVVKVDMLINSEKVDALAIIVHRSNSQYRGRQVASKMRELIPRQMFDVAIQATIGANIISRENVKALRKNVLAKCYGGDISRKKKLLEKQKAGKKRMKQVGSVEIPQEAFLAILQVDDK.

Positions 2 to 184 constitute a tr-type G domain; it reads NNIRNFSIIA…ALIAKVPPPK (183 aa). GTP contacts are provided by residues 14-19 and 131-134; these read DHGKST and NKID.

The protein belongs to the TRAFAC class translation factor GTPase superfamily. Classic translation factor GTPase family. LepA subfamily.

It localises to the cell inner membrane. It catalyses the reaction GTP + H2O = GDP + phosphate + H(+). In terms of biological role, required for accurate and efficient protein synthesis under certain stress conditions. May act as a fidelity factor of the translation reaction, by catalyzing a one-codon backward translocation of tRNAs on improperly translocated ribosomes. Back-translocation proceeds from a post-translocation (POST) complex to a pre-translocation (PRE) complex, thus giving elongation factor G a second chance to translocate the tRNAs correctly. Binds to ribosomes in a GTP-dependent manner. The protein is Elongation factor 4 of Herminiimonas arsenicoxydans.